A 490-amino-acid polypeptide reads, in one-letter code: Serine palmitoyltransferase 2 (490 aa).

The chain crosses the membrane as a helical span at residues Val-10–Phe-30. Residue Lys-321 is modified to N6-(pyridoxal phosphate)lysine.

This sequence belongs to the class-II pyridoxal-phosphate-dependent aminotransferase family. As to quaternary structure, forms a heterodimer with sptA. Pyridoxal 5'-phosphate is required as a cofactor.

Its subcellular location is the endoplasmic reticulum membrane. It catalyses the reaction L-serine + hexadecanoyl-CoA + H(+) = 3-oxosphinganine + CO2 + CoA. The protein operates within lipid metabolism; sphingolipid metabolism. Functionally, catalytic subunit of serine palmitoyltransferase (SPT), which catalyzes the committed step in the synthesis of sphingolipids, the condensation of serine with palmitoyl CoA to form the long chain base 3-ketosphinganine. The polypeptide is Serine palmitoyltransferase 2 (sptB) (Dictyostelium discoideum (Social amoeba)).